The primary structure comprises 66 residues: Large ribosomal subunit protein bL33c (66 aa).

It belongs to the bacterial ribosomal protein bL33 family.

It localises to the plastid. The protein localises to the chloroplast. This is Large ribosomal subunit protein bL33c from Ipomoea purpurea (Common morning glory).